We begin with the raw amino-acid sequence, 176 residues long: Probable chemoreceptor glutamine deamidase CheD (176 aa).

Belongs to the CheD family.

It catalyses the reaction L-glutaminyl-[protein] + H2O = L-glutamyl-[protein] + NH4(+). Probably deamidates glutamine residues to glutamate on methyl-accepting chemotaxis receptors (MCPs), playing an important role in chemotaxis. This Rhodospirillum rubrum (strain ATCC 11170 / ATH 1.1.1 / DSM 467 / LMG 4362 / NCIMB 8255 / S1) protein is Probable chemoreceptor glutamine deamidase CheD.